Reading from the N-terminus, the 422-residue chain is UDP-N-acetylglucosamine 1-carboxyvinyltransferase (422 aa).

A phosphoenolpyruvate-binding site is contributed by 22-23; sequence KN. Arginine 95 contacts UDP-N-acetyl-alpha-D-glucosamine. Cysteine 119 (proton donor) is an active-site residue. Cysteine 119 is modified (2-(S-cysteinyl)pyruvic acid O-phosphothioketal). Residues 124–128, aspartate 309, and valine 331 contribute to the UDP-N-acetyl-alpha-D-glucosamine site; that span reads RPIDQ.

This sequence belongs to the EPSP synthase family. MurA subfamily.

Its subcellular location is the cytoplasm. The enzyme catalyses phosphoenolpyruvate + UDP-N-acetyl-alpha-D-glucosamine = UDP-N-acetyl-3-O-(1-carboxyvinyl)-alpha-D-glucosamine + phosphate. Its pathway is cell wall biogenesis; peptidoglycan biosynthesis. Its function is as follows. Cell wall formation. Adds enolpyruvyl to UDP-N-acetylglucosamine. This Anaeromyxobacter sp. (strain Fw109-5) protein is UDP-N-acetylglucosamine 1-carboxyvinyltransferase.